The chain runs to 964 residues: Syndetin (964 aa).

Methionine 1 is modified (N-acetylmethionine). Residues 1–25 (MQKIKSLMTRQGLKSPPESLNDLGA) form a disordered region. Serine 15 is subject to Phosphoserine. Coiled coils occupy residues 81–107 (LNLQ…VADL) and 216–244 (YSCI…LSKI). Serine 494, serine 498, serine 559, and serine 561 each carry phosphoserine. The tract at residues 532-563 (DEETEDVLASNGYESDEQEKSAYQDYDSDSDV) is disordered. A Glycyl lysine isopeptide (Lys-Gly) (interchain with G-Cter in SUMO1); alternate cross-link involves residue lysine 963. A Glycyl lysine isopeptide (Lys-Gly) (interchain with G-Cter in SUMO2); alternate cross-link involves residue lysine 963.

It belongs to the syndetin family. Component of the endosome-associated retrograde protein (EARP) complex, composed of VPS51, VPS52, VPS53 and VPS50/Syndetin. The EARP complex interacts with EIPR1. Interacts with VPS51 and VPS53 in an EIPR1-independent manner. In terms of tissue distribution, expressed in the brain (at protein level).

It localises to the recycling endosome. It is found in the membrane. Acts as a component of the EARP complex that is involved in endocytic recycling. The EARP complex associates with Rab4-positive endosomes and promotes recycling of internalized transferrin receptor (TFRC) to the plasma membrane. Within the EARP complex, required to tether the complex to recycling endosomes. Not involved in retrograde transport from early and late endosomes to the trans-Golgi network (TGN). The polypeptide is Syndetin (Rattus norvegicus (Rat)).